A 448-amino-acid polypeptide reads, in one-letter code: Probable D-serine dehydratase (448 aa).

Lys-119 bears the N6-(pyridoxal phosphate)lysine mark.

It belongs to the serine/threonine dehydratase family. DsdA subfamily. It depends on pyridoxal 5'-phosphate as a cofactor.

The catalysed reaction is D-serine = pyruvate + NH4(+). This chain is Probable D-serine dehydratase, found in Pseudomonas aeruginosa (strain ATCC 15692 / DSM 22644 / CIP 104116 / JCM 14847 / LMG 12228 / 1C / PRS 101 / PAO1).